A 503-amino-acid polypeptide reads, in one-letter code: Probable cytosol aminopeptidase (503 aa).

2 residues coordinate Mn(2+): lysine 270 and aspartate 275. Residue lysine 282 is part of the active site. 3 residues coordinate Mn(2+): aspartate 293, aspartate 352, and glutamate 354. Arginine 356 is a catalytic residue.

The protein belongs to the peptidase M17 family. Mn(2+) is required as a cofactor.

It is found in the cytoplasm. The catalysed reaction is Release of an N-terminal amino acid, Xaa-|-Yaa-, in which Xaa is preferably Leu, but may be other amino acids including Pro although not Arg or Lys, and Yaa may be Pro. Amino acid amides and methyl esters are also readily hydrolyzed, but rates on arylamides are exceedingly low.. The enzyme catalyses Release of an N-terminal amino acid, preferentially leucine, but not glutamic or aspartic acids.. In terms of biological role, presumably involved in the processing and regular turnover of intracellular proteins. Catalyzes the removal of unsubstituted N-terminal amino acids from various peptides. This is Probable cytosol aminopeptidase from Edwardsiella ictaluri (strain 93-146).